The primary structure comprises 886 residues: UPF0592 membrane protein C7D4.03c (886 aa).

A disordered region spans residues isoleucine 87–serine 112. Residues serine 95–serine 112 show a composition bias toward low complexity. Helical transmembrane passes span phenylalanine 277–leucine 297, glycine 374–phenylalanine 394, and valine 400–serine 420.

It belongs to the UPF0592 family.

It is found in the membrane. The protein is UPF0592 membrane protein C7D4.03c of Schizosaccharomyces pombe (strain 972 / ATCC 24843) (Fission yeast).